Here is a 260-residue protein sequence, read N- to C-terminus: MGSQHSSALTFCQRKKDDNPEDLLAERDQEEAIAQFPYVEFTGRNSITCHTCQGAGYIPEEQVNKLVALIPHSDQRLRPQRTKQYVLLSVLLCLLASGLVFFFLFPHSVLVDDNGIRVSNVTFNKQDSLVVLDVTATLKIRNSNFYPVAVTNLFSQVQYMKAVVGSYTAANVSLIPPRSEHLVNFTVKAEVGGPSSYVYFYCTLPAILVHNIVIFMRTSVQISYIGHTSQSTLEAQHNVDCGENSTAVQSLLLVPWGPHL.

Residue Gly-2 is the site of N-myristoyl glycine attachment. Residues 85–105 (YVLLSVLLCLLASGLVFFFLF) traverse the membrane as a helical segment. N-linked (GlcNAc...) asparagine glycosylation occurs at Asn-171. Residues 196 to 216 (SYVYFYCTLPAILVHNIVIFM) form a helical membrane-spanning segment.

The protein belongs to the TMEM106 family. As to quaternary structure, interacts with TMEM106B.

It is found in the endoplasmic reticulum membrane. Its subcellular location is the membrane. This is Transmembrane protein 106C (Tmem106c) from Rattus norvegicus (Rat).